The chain runs to 251 residues: Small ribosomal subunit protein uS2 (251 aa).

Belongs to the universal ribosomal protein uS2 family.

This Chlorobium chlorochromatii (strain CaD3) protein is Small ribosomal subunit protein uS2.